The following is a 313-amino-acid chain: Ribonuclease HIII (313 aa).

Positions 62–88 are disordered; that stretch reads AERWTADAETPAPKKPASKKSIPSVYQ. Positions 96–312 constitute an RNase H type-2 domain; sequence MSVIGSDEVG…TQKAKRIASK (217 aa). A divalent metal cation is bound by residues Asp-102, Glu-103, and Asp-207.

The protein belongs to the RNase HII family. RnhC subfamily. It depends on Mn(2+) as a cofactor. Requires Mg(2+) as cofactor.

It localises to the cytoplasm. The enzyme catalyses Endonucleolytic cleavage to 5'-phosphomonoester.. Endonuclease that specifically degrades the RNA of RNA-DNA hybrids. In Bacillus licheniformis (strain ATCC 14580 / DSM 13 / JCM 2505 / CCUG 7422 / NBRC 12200 / NCIMB 9375 / NCTC 10341 / NRRL NRS-1264 / Gibson 46), this protein is Ribonuclease HIII.